A 248-amino-acid chain; its full sequence is 2,3-bisphosphoglycerate-dependent phosphoglycerate mutase (248 aa).

Substrate is bound by residues 8–15 (RHGESAWN), 21–22 (TG), R60, 87–90 (EKHY), K98, 114–115 (RR), and 183–184 (GN). H9 functions as the Tele-phosphohistidine intermediate in the catalytic mechanism. The active-site Proton donor/acceptor is the E87.

The protein belongs to the phosphoglycerate mutase family. BPG-dependent PGAM subfamily.

The enzyme catalyses (2R)-2-phosphoglycerate = (2R)-3-phosphoglycerate. It participates in carbohydrate degradation; glycolysis; pyruvate from D-glyceraldehyde 3-phosphate: step 3/5. Its function is as follows. Catalyzes the interconversion of 2-phosphoglycerate and 3-phosphoglycerate. The chain is 2,3-bisphosphoglycerate-dependent phosphoglycerate mutase from Bacteroides fragilis (strain ATCC 25285 / DSM 2151 / CCUG 4856 / JCM 11019 / LMG 10263 / NCTC 9343 / Onslow / VPI 2553 / EN-2).